Here is a 208-residue protein sequence, read N- to C-terminus: RNA chaperone ProQ (208 aa).

Basic and acidic residues-rich tracts occupy residues 99–115 (AQET…EKNK) and 126–135 (PAKDKPENTA). The interval 99 to 149 (AQETLKESKAKVAEKNKATNKAAAKKAPAKDKPENTAKAKPKTAKKPAKPK) is disordered. Over residues 137 to 149 (AKPKTAKKPAKPK) the composition is skewed to basic residues.

It belongs to the ProQ family.

Its subcellular location is the cytoplasm. In terms of biological role, RNA chaperone with significant RNA binding, RNA strand exchange and RNA duplexing activities. This Idiomarina loihiensis (strain ATCC BAA-735 / DSM 15497 / L2-TR) protein is RNA chaperone ProQ.